The chain runs to 868 residues: MASLDNLVARYQRCFNDQSLKNSTIELEIRFQQINFLLFKTVYEALVAQEIPSTISHSIRCIKKVHHENHCREKILPSENLYFKKQPLMFFKFSEPASLGCKVSLAIEQPIRKFILDSSVLVRLKNRTTFRVSELWKIELTIVKQLMGSEVSAKLTAFKTLLFDTPEQQTTKNMMSLINPDDEYLYEIEIEYTGKPESLTAADIIKIKNTVLTLISPNHLMLTAYHQAIEFIASHILSSEILLARIKSGKWGLKRLLPQVKSMTKADYMKFYPPVGYYITDKADGIRGIAVIQDTQIYVVADQLYSLGTTGIEPLKPTILDGEFMPEKKEFYGFDVIMYEGNLLTQQGFETRIESLSKGIKVLQAFNIKAEMKPFISLTSADPNVLLKNFESIFKKKTRPYSIDGIILVEPGNSYLNTNTFKWKPTWDNTLDFLVRKCPESLNVPEYAPKKGFSLHLLFVGISGELFKKLALNWCPGYTKLFPVTQRNQNYFPVQFQPSDFPLAFLYYHPDTSSFSDIDGKVLEMRCLKREINHVSWEIVKIREDRQQDLKTGGYFGNDFKTAELTWLNYMDPFSFEELAKGPSGMYFAGAKTGIYRAQTALISFIKQEIIQKISHQSWVIDLGIGKGQDLGRYLDAGVRHLVGIDKDQTALAELVYRKFSHATTRQHKHATNIYVLHQDLAEPAKEISEKVHQIYGFPKEGASSIVSNLFIHYLMKNTQQVENLAVLCHKLLQPGGMVWFTTMLGERVLELLHENRIELNEVWEARENEVVKFAIKRLFKEDILQETGQEIGVLLPFSNGDFYNEYLVNTAFLIKIFKHHGFSLVQKQSFKDWIPEFQNFSKSLYKILTEADKTWTSLFGFICLRKN.

Catalysis depends on Lys282, which acts as the N6-GMP-lysine intermediate. The mRNA cap 0 methyltransferase domain maps to 594 to 868 (GIYRAQTALI…LFGFICLRKN (275 aa)). Residues Lys607, Gly624, Asp646, and 710-712 (LFI) each bind S-adenosyl-L-methionine.

It in the N-terminal section; belongs to the dsDNA virus mRNA guanylyltransferase family. In the C-terminal section; belongs to the class I-like SAM-binding methyltransferase superfamily. mRNA cap 0 methyltransferase family. Part of the viral DNA-directed RNA polymerase that consists of 8 polII-like subunits (RPB1, RPB2, RPB3, RPB5, RPB6, RPB7, RPB9, RPB10), a capping enzyme and a termination factor.

The protein localises to the virion. The enzyme catalyses a 5'-end triphospho-ribonucleoside in mRNA + H2O = a 5'-end diphospho-ribonucleoside in mRNA + phosphate + H(+). It catalyses the reaction a 5'-end diphospho-ribonucleoside in mRNA + GTP + H(+) = a 5'-end (5'-triphosphoguanosine)-ribonucleoside in mRNA + diphosphate. It carries out the reaction a 5'-end (5'-triphosphoguanosine)-ribonucleoside in mRNA + S-adenosyl-L-methionine = a 5'-end (N(7)-methyl 5'-triphosphoguanosine)-ribonucleoside in mRNA + S-adenosyl-L-homocysteine. It functions in the pathway mRNA processing; mRNA capping. In terms of biological role, probably catalyzes the second reaction in the mRNA cap formation pathway. Forms a covalent complex with GTP. In Ornithodoros (relapsing fever ticks), this protein is mRNA-capping enzyme.